The chain runs to 227 residues: RNA-free ribonuclease P (227 aa).

It belongs to the HARP family.

The catalysed reaction is Endonucleolytic cleavage of RNA, removing 5'-extranucleotides from tRNA precursor.. RNA-free RNase P that catalyzes the removal of the 5'-leader sequence from pre-tRNA to produce the mature 5'-terminus. In Archaeoglobus fulgidus (strain ATCC 49558 / DSM 4304 / JCM 9628 / NBRC 100126 / VC-16), this protein is RNA-free ribonuclease P.